The chain runs to 243 residues: NAD-dependent protein deacetylase (243 aa).

Residues 1 to 243 form the Deacetylase sirtuin-type domain; the sequence is MRNDLETLKH…VSVVKSLMTE (243 aa). NAD(+)-binding residues include A24, F35, R36, Q105, I107, D108, and H123. Residue F35 participates in nicotinamide binding. Nicotinamide-binding residues include I107 and D108. The Proton acceptor role is filled by H123. Zn(2+)-binding residues include C131, C134, C151, and C154. NAD(+) contacts are provided by S192, S193, N215, and D232.

This sequence belongs to the sirtuin family. Class U subfamily. Zn(2+) serves as cofactor.

It localises to the cytoplasm. The enzyme catalyses N(6)-acetyl-L-lysyl-[protein] + NAD(+) + H2O = 2''-O-acetyl-ADP-D-ribose + nicotinamide + L-lysyl-[protein]. Functionally, NAD-dependent protein deacetylase which modulates the activities of several enzymes which are inactive in their acetylated form. The sequence is that of NAD-dependent protein deacetylase from Staphylococcus aureus (strain MSSA476).